Here is a 79-residue protein sequence, read N- to C-terminus: Conotoxin PnMSGL-03 (79 aa).

Residues 1-20 (MSRLGIMVLTLLLLVFIVTS) form the signal peptide. A propeptide spanning residues 21–44 (HQDAGEKQATQRDAINFRWRRSLI) is cleaved from the precursor. Cystine bridges form between Cys52–Cys64, Cys56–Cys73, and Cys63–Cys77. Leu78 carries the leucine amide modification.

This sequence belongs to the conotoxin O3 superfamily. As to expression, expressed by the venom duct.

The protein localises to the secreted. This chain is Conotoxin PnMSGL-03, found in Conus pennaceus (Feathered cone).